A 329-amino-acid chain; its full sequence is MLAALNAPFPWTRRHVLSLEDFSAAEYALVLQTAGSFQQVLARRNRKVPTLQGRIIVNLFFESSTRTRTSFELAAKALSADVVNFSAATSSLTKGETIFDTTRTFLAMGMDIVVVRHRDSGVPHAVARDLEQLGSPVSVINAGDGQHEHPTQALLDLFTLCTLLDAYDPRPELLAGKKIVIVGDILHSRVARSNLCSLVTCGGEVHLAGPPTLLPGEFRQYGATLHHHLAPALEGADFVMTLRLQKERMGDYLLPSLREYHRLYGITRERLALCSPGVRLLHPGPVNRGVELSSDLLDDPRLSLVSQQVTSGVAVRMALLYLLAGGKAA.

The carbamoyl phosphate site is built by Arg-66 and Thr-67. Lys-94 provides a ligand contact to L-aspartate. Carbamoyl phosphate contacts are provided by Arg-116, His-149, and Gln-152. Residues Arg-189 and Arg-243 each coordinate L-aspartate. Carbamoyl phosphate contacts are provided by Gly-284 and Pro-285.

The protein belongs to the aspartate/ornithine carbamoyltransferase superfamily. ATCase family. In terms of assembly, heterododecamer (2C3:3R2) of six catalytic PyrB chains organized as two trimers (C3), and six regulatory PyrI chains organized as three dimers (R2).

It catalyses the reaction carbamoyl phosphate + L-aspartate = N-carbamoyl-L-aspartate + phosphate + H(+). Its pathway is pyrimidine metabolism; UMP biosynthesis via de novo pathway; (S)-dihydroorotate from bicarbonate: step 2/3. Functionally, catalyzes the condensation of carbamoyl phosphate and aspartate to form carbamoyl aspartate and inorganic phosphate, the committed step in the de novo pyrimidine nucleotide biosynthesis pathway. This Gloeobacter violaceus (strain ATCC 29082 / PCC 7421) protein is Aspartate carbamoyltransferase catalytic subunit.